The primary structure comprises 439 residues: Sequestosome-1 (439 aa).

A2 is subject to N-acetylalanine. The interval 2–48 (ASLTVKAYLLGKEEAAREIRRFSFCFSPEPEAEAAAGPGPCERLLSR) is interaction with LCK. Positions 3–100 (SLTVKAYLLG…DIFRIYIKEK (98 aa)) constitute a PB1 domain. Residue S24 is modified to Phosphoserine. The segment at 41–105 (PCERLLSRVA…YIKEKKECRR (65 aa)) is interaction with PRKCZ and dimerization. The segment at 48–78 (RVAVLFPALRPGGFQAHYRDEDGDLVAFSSD) is interaction with PAWR. Positions 119-221 (VHPNVICDGC…DGRPCPTAES (103 aa)) are interaction with GABRR3. The segment at 120-170 (HPNVICDGCNGPVVGTRYKCSVCPDYDLCSVCEGKGLHREHSKLIFPNPFG) adopts a ZZ-type zinc-finger fold. C125, C128, C139, and C142 together coordinate Zn(2+). A Phosphotyrosine modification is found at Y145. Zn(2+) is bound by residues C148, C151, H157, and H160. The tract at residues 167-217 (NPFGHLSDSFSHSRWLRKLKHGHFGWPGWEMGPPGNWSPRPPRAGDGRPCP) is LIM protein-binding. 3 positions are modified to phosphoserine: S173, S175, and S204. The interval 201-231 (GNWSPRPPRAGDGRPCPTAESASAPSEDPNV) is disordered. A TRAF6-binding motif is present at residues 225-230 (PSEDPN). 2 positions are modified to phosphoserine: S246 and S263. The disordered stretch occupies residues 259 to 389 (GGKRSRLTPT…ALYPHLPPEA (131 aa)). Over residues 265-292 (LTPTSAESSSTGTEDKSGTQPSSCSSEV) the composition is skewed to polar residues. T266 bears the Phosphothreonine mark. Positions 266–439 (TPTSAESSST…IQYSKHPPPL (174 aa)) are interaction with NTRK1. Phosphoserine is present on residues S269 and S281. C288 is lipidated: S-palmitoyl cysteine. Phosphoserine is present on residues S305, S327, and S331. Residues 320–341 (QPEELMESDNCSGGDDDWTHLS) are MAP1LC3B-binding. The LIR signature appears at 335–340 (DDWTHL). Residues 336–346 (DWTHLSSKEVD) are compositionally biased toward basic and acidic residues. An interaction with KEAP1 region spans residues 346–351 (DPSTGE). Phosphoserine occurs at positions 348, 354, 360, 364, and 365. Positions 350-372 (GELQSLQMPESEGPSSLDPSQEG) are enriched in polar residues. Positions 388-433 (EADPRLIESLSQMLSMGFSDEGGWLTRLLQTKNYDIGAALDTIQYS) constitute a UBA domain. S402 is subject to Phosphoserine; by ULK1 and TBK1. S406 carries the post-translational modification Phosphoserine. Residues K419 and K434 each carry the N6-acetyllysine; alternate modification. A Glycyl lysine isopeptide (Lys-Gly) (interchain with G-Cter in ubiquitin); alternate cross-link involves residue K419. A Glycyl lysine isopeptide (Lys-Gly) (interchain with G-Cter in SUMO2); alternate cross-link involves residue K434.

In terms of assembly, homooligomer or heterooligomer; may form homotypic arrays. Dimerization interferes with ubiquitin binding. Component of a ternary complex with PAWR and PRKCZ. Forms a complex with JUB/Ajuba, PRKCZ and TRAF6. Identified in a complex with TRAF6 and CYLD. Identified in a heterotrimeric complex with ubiquitin and ZFAND5, where ZFAND5 and SQSTM1 both interact with the same ubiquitin molecule. Interacts (via LIR motif) with MAP1LC3A and MAP1LC3B, as well as with other ATG8 family members, including GABARAP, GABARAPL1 and GABARAPL2; these interactions are necessary for the recruitment MAP1 LC3 family members to inclusion bodies containing polyubiquitinated protein aggregates and for their degradation by autophagy. Interacts directly with PRKCI and PRKCZ. Interacts with EBI3, LCK, RASA1, NR2F2, NTRK1, NTRK2, NTRK3, NBR1, MAP2K5 and MAPKAPK5. Upon TNF-alpha stimulation, interacts with RIPK1 probably bridging IKBKB to the TNF-R1 complex composed of TNF-R1/TNFRSF1A, TRADD and RIPK1. Interacts with the proteasome subunits PSMD4 and PSMC2. Interacts with TRAF6. Interacts with 'Lys-63'-linked polyubiquitinated MAPT/TAU. Interacts with FHOD3. Interacts with CYLD. Interacts with SESN1. Interacts with SESN2. Interacts with ULK1. Interacts with UBD. Interacts with WDR81; the interaction is direct and regulates the interaction of SQSTM1 with ubiquitinated proteins. Interacts with WDFY3; this interaction is required to recruit WDFY3 to cytoplasmic bodies and to PML bodies. Interacts with LRRC25. Interacts with STING1; leading to relocalization of STING1 to autophagosomes. Interacts (when phosphorylated at Ser-348) with KEAP1; the interaction is direct and inactivates the BCR(KEAP1) complex by sequestering KEAP1 in inclusion bodies, promoting its degradation. Interacts with MOAP1; promoting dissociation of SQSTM1 inclusion bodies that sequester KEAP1. Interacts with GBP1. Interacts with TAX1BP1. Interacts with (ubiquitinated) PEX5; specifically binds PEX5 ubiquitinated at 'Lys-209' in response to reactive oxygen species (ROS). Interacts (via PB1 domain) with TNS2; the interaction leads to sequestration of TNS2 in cytoplasmic aggregates with SQSTM1 and promotes TNS2 ubiquitination and proteasomal degradation. Interacts with IRS1; the interaction is disrupted by the presence of tensin TNS2. Interacts with TRIM5. Interacts with TRIM11 (when ubiquitinated); promoting AIM2 recruitment to autophagosomes and autophagy-dependent degradation of AIM2. Interacts with TRIM13. Interacts with TRIM16. Interacts with TRIM23. Interacts with TRIM50. Interacts with TRIM55. Interacts with ECSIT; this interaction inhibits TLR4 signaling via functional regulation of the TRAF6-ECSIT complex. Interacts with GABRR1, GABRR2 and GABRR3. Interacts with WDR83. Interacts with GRB2. Interacts with USP12; the interaction is independent of USP12 deubiquitinase activity and may be involved in regulation of autophagic flux. Interacts with ASB6. Post-translationally, phosphorylated. Phosphorylation at Ser-406 by ULK1 destabilizes the UBA dimer interface and increases binding affinity to ubiquitinated proteins. Phosphorylation at Ser-406 also primes for subsequent phosphorylation at Ser-402. Phosphorylation at Ser-402 by CK2 or ULK1 promotes binding to ubiquitinated proteins by increasing the affinity between the UBA domain and polyubiquitin chains. Phosphorylation at Ser-402 by ULK1 is stimulated by SESN2. Phosphorylated at Ser-402 by TBK1, leading to promote relocalization of 'Lys-63'-linked ubiquitinated STING1 to autophagosomes. Phosphorylation at Ser-348 by ULK1 promotes interaction with KEAP1 and inactivation of the BCR(KEAP1) complex, promoting NFE2L2/NRF2 nuclear accumulation and expression of phase II detoxifying enzymes. Phosphorylated in vitro by TTN. Ubiquitinated by UBE2J1 and RNF26 at Lys-434: ubiquitinated SQSTM1 attracts specific vesicle-associated adapters, forming a molecular bridge that restrains cognate vesicles in the perinuclear region and organizes the endosomal pathway for efficient cargo transport. Ubiquitination by UBE2D2 and UBE2D3 increases its ability to bind polyubiquitin chains by destabilizing the UBA dimer interface. Deubiquitination by USP15 releases target vesicles for fast transport into the cell periphery. Ubiquitinated by the BCR(KEAP1) complex at Lys-419, increasing SQSTM1 sequestering activity and promoting its degradation. Ubiquitinated via 'Lys-29' and 'Lys-33'-linked polyubiquitination leading to xenophagic targeting of bacteria and inhibition of their replication. In terms of processing, acetylated at Lys-419 and Lys-434 by KAT5/TIP60, promotes activity by destabilizing the UBA dimer interface and increases binding affinity to ubiquitinated proteins. Deacetylated by HDAC6. Post-translationally, palmitoylation at Cys-288 by ZDHHC19 is required for efficient autophagic degradation of SQSTM1-cargo complexes by promoting affinity for ATG8 proteins and recruitment of p62 bodies to autophagosomes. Dealmitoylated at Cys-288 by LYPLA1. In terms of tissue distribution, ubiquitously expressed. In brain, mainly expressed by neurons, especially pyramidal neurons in the cerebral cortex and hippocampus. Also expressed by Purkinje cells and neurons in the dentate nucleus of the cerebellum and neurons of the basal ganglia (at protein level).

Its subcellular location is the cytoplasmic vesicle. It is found in the autophagosome. The protein resides in the preautophagosomal structure. The protein localises to the cytoplasm. It localises to the cytosol. Its subcellular location is the nucleus. It is found in the PML body. The protein resides in the late endosome. The protein localises to the lysosome. It localises to the endoplasmic reticulum. Its subcellular location is the myofibril. It is found in the sarcomere. Molecular adapter required for selective macroautophagy (aggrephagy) by acting as a bridge between polyubiquitinated proteins and autophagosomes. Promotes the recruitment of ubiquitinated cargo proteins to autophagosomes via multiple domains that bridge proteins and organelles in different steps. SQSTM1 first mediates the assembly and removal of ubiquitinated proteins by undergoing liquid-liquid phase separation upon binding to ubiquitinated proteins via its UBA domain, leading to the formation of insoluble cytoplasmic inclusions, known as p62 bodies. SQSTM1 then interacts with ATG8 family proteins on autophagosomes via its LIR motif, leading to p62 body recruitment to autophagosomes, followed by autophagic clearance of ubiquitinated proteins. SQSTM1 is itself degraded along with its ubiquitinated cargos. Also required to recruit ubiquitinated proteins to PML bodies in the nucleus. Also involved in autophagy of peroxisomes (pexophagy) in response to reactive oxygen species (ROS) by acting as a bridge between ubiquitinated PEX5 receptor and autophagosomes. Acts as an activator of the NFE2L2/NRF2 pathway via interaction with KEAP1: interaction inactivates the BCR(KEAP1) complex by sequestering the complex in inclusion bodies, promoting nuclear accumulation of NFE2L2/NRF2 and subsequent expression of cytoprotective genes. Promotes relocalization of 'Lys-63'-linked ubiquitinated STING1 to autophagosomes. Involved in endosome organization by retaining vesicles in the perinuclear cloud: following ubiquitination by RNF26, attracts specific vesicle-associated adapters, forming a molecular bridge that restrains cognate vesicles in the perinuclear region and organizes the endosomal pathway for efficient cargo transport. Sequesters tensin TNS2 into cytoplasmic puncta, promoting TNS2 ubiquitination and proteasomal degradation. May regulate the activation of NFKB1 by TNF-alpha, nerve growth factor (NGF) and interleukin-1. May play a role in titin/TTN downstream signaling in muscle cells. Adapter that mediates the interaction between TRAF6 and CYLD. Its function is as follows. More potent than isoform 2 to stimulate PRKCZ-dependent phosphorylation of KCNAB2. This Rattus norvegicus (Rat) protein is Sequestosome-1 (Sqstm1).